Here is a 399-residue protein sequence, read N- to C-terminus: Phosphoglycerate kinase (399 aa).

Residues 22 to 24 (DLN), Arg37, 60 to 63 (HFGR), Arg119, and Arg152 each bind substrate. Residues Lys202, Glu324, and 354-357 (GGDT) each bind ATP.

Belongs to the phosphoglycerate kinase family. In terms of assembly, monomer.

The protein localises to the cytoplasm. It catalyses the reaction (2R)-3-phosphoglycerate + ATP = (2R)-3-phospho-glyceroyl phosphate + ADP. It participates in carbohydrate degradation; glycolysis; pyruvate from D-glyceraldehyde 3-phosphate: step 2/5. In Sinorhizobium medicae (strain WSM419) (Ensifer medicae), this protein is Phosphoglycerate kinase.